We begin with the raw amino-acid sequence, 653 residues long: Amyloid beta A4 precursor protein-binding family B member 1-interacting protein (653 aa).

The disordered stretch occupies residues 82–141; that stretch reads NNKSTAPFPPADASNSYHFHPPPMPSIITEDLSLLPPPPEFDPHYPPPPPDPLTEPKTQE. Residues 116–134 are compositionally biased toward pro residues; it reads LPPPPEFDPHYPPPPPDPL. Residues 165–253 enclose the Ras-associating domain; sequence KKRIVKVHMI…IHFLEKNEKY (89 aa). The region spanning 295 to 404 is the PH domain; it reads VPELEAALYL…WVTGIRIAKY (110 aa). Positions 462 to 481 are enriched in basic and acidic residues; sequence KHGEANKQEKKSSEVNKPET. The disordered stretch occupies residues 462–653; that stretch reads KHGEANKQEK…ALQKKREPPT (192 aa). Pro residues predominate over residues 585–604; that stretch reads PAPPPPPPPPAPAANVPPLP. Residues 605–614 are compositionally biased toward basic residues; the sequence is VKKHPPKPPK.

The protein belongs to the MRL family.

The protein localises to the cell membrane. Its subcellular location is the cytoplasm. It localises to the cytoskeleton. Its function is as follows. Appears to function in the signal transduction from Ras activation to actin cytoskeletal remodeling. This chain is Amyloid beta A4 precursor protein-binding family B member 1-interacting protein (apbb1ip), found in Xenopus laevis (African clawed frog).